Consider the following 164-residue polypeptide: Leucine-rich single-pass membrane protein 2 (164 aa).

A helical transmembrane segment spans residues 97-117 (GFLLLLALLVLTCLVLALLAV).

The protein resides in the membrane. The protein is Leucine-rich single-pass membrane protein 2 (LSMEM2) of Homo sapiens (Human).